Consider the following 367-residue polypeptide: Probable butyrate kinase (367 aa).

This sequence belongs to the acetokinase family.

It localises to the cytoplasm. The enzyme catalyses butanoate + ATP = butanoyl phosphate + ADP. The protein is Probable butyrate kinase of Bacillus cereus (strain G9842).